We begin with the raw amino-acid sequence, 838 residues long: Translation initiation factor IF-2 (838 aa).

Disordered stretches follow at residues 30–60 (PHTA…KVEE) and 94–254 (QRSP…PTGP). Composition is skewed to basic and acidic residues over residues 33 to 43 (AAEEHVSDSEK) and 96 to 136 (SPEE…EARR). The segment covering 137–173 (QPAPVAEPVAAQAAAPAPAPVVEPVQEAPVATAAPAA) has biased composition (low complexity). 2 stretches are compositionally biased toward basic and acidic residues: residues 174 to 214 (DARK…EKAP) and 222 to 231 (TTDEESDGFR). The segment covering 232 to 245 (RGGRGKAKLKKRNA) has biased composition (basic residues). The region spanning 338-507 (ARAPVVTVMG…LLQAEVLELK (170 aa)) is the tr-type G domain. The tract at residues 347–354 (GHVDHGKT) is G1. 347 to 354 (GHVDHGKT) contacts GTP. Positions 372–376 (GITQH) are G2. The G3 stretch occupies residues 393-396 (DTPG). Residues 393–397 (DTPGH) and 447–450 (NKID) contribute to the GTP site. Residues 447 to 450 (NKID) are G4. The tract at residues 483 to 485 (SAK) is G5.

This sequence belongs to the TRAFAC class translation factor GTPase superfamily. Classic translation factor GTPase family. IF-2 subfamily.

The protein localises to the cytoplasm. One of the essential components for the initiation of protein synthesis. Protects formylmethionyl-tRNA from spontaneous hydrolysis and promotes its binding to the 30S ribosomal subunits. Also involved in the hydrolysis of GTP during the formation of the 70S ribosomal complex. In Pseudomonas fluorescens (strain ATCC BAA-477 / NRRL B-23932 / Pf-5), this protein is Translation initiation factor IF-2.